Consider the following 158-residue polypeptide: Pathogenesis-related protein 2 (158 aa).

It belongs to the BetVI family.

The sequence is that of Pathogenesis-related protein 2 (PR2) from Petroselinum crispum (Parsley).